The following is a 348-amino-acid chain: Dihydroorotase (348 aa).

Zn(2+) is bound by residues H17 and H19. Residues H19–R21 and N45 each bind substrate. K103, H140, and H178 together coordinate Zn(2+). At K103 the chain carries N6-carboxylysine. H140 is a substrate binding site. Substrate is bound at residue L223. Zn(2+) is bound at residue D251. Residue D251 is part of the active site. H255 and A267 together coordinate substrate.

This sequence belongs to the metallo-dependent hydrolases superfamily. DHOase family. Class II DHOase subfamily. In terms of assembly, homodimer. It depends on Zn(2+) as a cofactor.

It carries out the reaction (S)-dihydroorotate + H2O = N-carbamoyl-L-aspartate + H(+). The protein operates within pyrimidine metabolism; UMP biosynthesis via de novo pathway; (S)-dihydroorotate from bicarbonate: step 3/3. Functionally, catalyzes the reversible cyclization of carbamoyl aspartate to dihydroorotate. This Yersinia pseudotuberculosis serotype O:1b (strain IP 31758) protein is Dihydroorotase.